Consider the following 402-residue polypeptide: 4-hydroxy-3-methylbut-2-enyl diphosphate reductase (402 aa).

Position 66 (Cys66) interacts with [4Fe-4S] cluster. His96 serves as a coordination point for (2E)-4-hydroxy-3-methylbut-2-enyl diphosphate. His96 lines the dimethylallyl diphosphate pocket. Residue His96 coordinates isopentenyl diphosphate. Cys157 lines the [4Fe-4S] cluster pocket. Residue His185 participates in (2E)-4-hydroxy-3-methylbut-2-enyl diphosphate binding. Position 185 (His185) interacts with dimethylallyl diphosphate. His185 contacts isopentenyl diphosphate. Residue Glu187 is the Proton donor of the active site. Position 250 (Thr250) interacts with (2E)-4-hydroxy-3-methylbut-2-enyl diphosphate. Cys288 serves as a coordination point for [4Fe-4S] cluster. Positions 317, 318, 319, and 379 each coordinate (2E)-4-hydroxy-3-methylbut-2-enyl diphosphate. Residues Ser317, Ser318, Asn319, and Ser379 each coordinate dimethylallyl diphosphate. Isopentenyl diphosphate-binding residues include Ser317, Ser318, Asn319, and Ser379.

This sequence belongs to the IspH family. The cofactor is [4Fe-4S] cluster.

It carries out the reaction isopentenyl diphosphate + 2 oxidized [2Fe-2S]-[ferredoxin] + H2O = (2E)-4-hydroxy-3-methylbut-2-enyl diphosphate + 2 reduced [2Fe-2S]-[ferredoxin] + 2 H(+). It catalyses the reaction dimethylallyl diphosphate + 2 oxidized [2Fe-2S]-[ferredoxin] + H2O = (2E)-4-hydroxy-3-methylbut-2-enyl diphosphate + 2 reduced [2Fe-2S]-[ferredoxin] + 2 H(+). It participates in isoprenoid biosynthesis; dimethylallyl diphosphate biosynthesis; dimethylallyl diphosphate from (2E)-4-hydroxy-3-methylbutenyl diphosphate: step 1/1. The protein operates within isoprenoid biosynthesis; isopentenyl diphosphate biosynthesis via DXP pathway; isopentenyl diphosphate from 1-deoxy-D-xylulose 5-phosphate: step 6/6. Catalyzes the conversion of 1-hydroxy-2-methyl-2-(E)-butenyl 4-diphosphate (HMBPP) into a mixture of isopentenyl diphosphate (IPP) and dimethylallyl diphosphate (DMAPP). Acts in the terminal step of the DOXP/MEP pathway for isoprenoid precursor biosynthesis. The chain is 4-hydroxy-3-methylbut-2-enyl diphosphate reductase from Crocosphaera subtropica (strain ATCC 51142 / BH68) (Cyanothece sp. (strain ATCC 51142)).